A 280-amino-acid chain; its full sequence is Orotidine 5'-phosphate decarboxylase (280 aa).

Residues D40, 62–64 (KTH), 93–102 (DRKFVDIGNT), Y228, and R246 each bind substrate. K95 acts as the Proton donor in catalysis.

This sequence belongs to the OMP decarboxylase family.

It catalyses the reaction orotidine 5'-phosphate + H(+) = UMP + CO2. Its pathway is pyrimidine metabolism; UMP biosynthesis via de novo pathway; UMP from orotate: step 2/2. The protein is Orotidine 5'-phosphate decarboxylase (PYRG) of Solorina crocea.